The chain runs to 420 residues: Serine hydroxymethyltransferase (420 aa).

(6S)-5,6,7,8-tetrahydrofolate is bound by residues leucine 121 and 125-127 (GHL). Lysine 229 is subject to N6-(pyridoxal phosphate)lysine.

The protein belongs to the SHMT family. Homodimer. Requires pyridoxal 5'-phosphate as cofactor.

The protein localises to the cytoplasm. It catalyses the reaction (6R)-5,10-methylene-5,6,7,8-tetrahydrofolate + glycine + H2O = (6S)-5,6,7,8-tetrahydrofolate + L-serine. Its pathway is one-carbon metabolism; tetrahydrofolate interconversion. It functions in the pathway amino-acid biosynthesis; glycine biosynthesis; glycine from L-serine: step 1/1. Catalyzes the reversible interconversion of serine and glycine with tetrahydrofolate (THF) serving as the one-carbon carrier. This reaction serves as the major source of one-carbon groups required for the biosynthesis of purines, thymidylate, methionine, and other important biomolecules. Also exhibits THF-independent aldolase activity toward beta-hydroxyamino acids, producing glycine and aldehydes, via a retro-aldol mechanism. The polypeptide is Serine hydroxymethyltransferase (Wigglesworthia glossinidia brevipalpis).